Here is a 244-residue protein sequence, read N- to C-terminus: Uridylate kinase (244 aa).

Lysine 19–glycine 22 serves as a coordination point for ATP. Residues glycine 27–glycine 32 form an involved in allosteric activation by GTP region. Glycine 61 serves as a coordination point for UMP. Residues glycine 62 and arginine 66 each coordinate ATP. UMP contacts are provided by residues aspartate 80 and isoleucine 141–threonine 148. Residues threonine 168, glutamine 169, tyrosine 174, and aspartate 177 each coordinate ATP.

It belongs to the UMP kinase family. In terms of assembly, homohexamer.

It is found in the cytoplasm. The enzyme catalyses UMP + ATP = UDP + ADP. Its pathway is pyrimidine metabolism; CTP biosynthesis via de novo pathway; UDP from UMP (UMPK route): step 1/1. Its activity is regulated as follows. Allosterically activated by GTP. Inhibited by UTP. Catalyzes the reversible phosphorylation of UMP to UDP. The polypeptide is Uridylate kinase (Anaplasma phagocytophilum (strain HZ)).